The primary structure comprises 284 residues: Non-selective voltage-gated ion channel VDAC3 (284 aa).

The residue at position 2 (Cys2) is an N-acetylcysteine. Thr4 carries the post-translational modification Phosphothreonine. Lys12, Lys15, and Lys20 each carry N6-acetyllysine. The next 2 beta stranded transmembrane spans lie at 26-35 (MVKIDLKTKS) and 39-48 (VMEFSTSGHA). Lys54 participates in a covalent cross-link: Glycyl lysine isopeptide (Lys-Gly) (interchain with G-Cter in ubiquitin). The next 3 membrane-spanning stretches (beta stranded) occupy residues 55-65 (ASGNLETKYKV), 70-77 (LTFTQKWN), and 81-90 (TLGTEISWEN). At Lys91 the chain carries N6-acetyllysine. A beta stranded membrane pass occupies residues 96–105 (LKLTLDTIFV). Residues Lys110 and Lys111 each participate in a glycyl lysine isopeptide (Lys-Gly) (interchain with G-Cter in ubiquitin) cross-link. The next 10 beta stranded transmembrane spans lie at 112–121 (SGKLKASYKR), 124–131 (FSVGSNVD), 138–146 (TIYGWAVLA), 151–159 (LAGYQMSFD), 164–176 (KLSQ…GYKA), 179–186 (FQLHTHVN), 190–199 (EFGGSIYQKV), 203–212 (IETSINLAWT), 219–228 (RFGIAAKYML), and 232–239 (TSLSAKVN). A Phosphoserine modification is found at Ser242. Residues 243–245 (LIG) and 261–265 (SALID) each bind NAD(+). The next 2 beta stranded transmembrane spans lie at 243-252 (LIGLGYTQTL) and 255-264 (GVKLTLSALI). At Lys267 the chain carries N6-acetyllysine; alternate. Lys267 participates in a covalent cross-link: Glycyl lysine isopeptide (Lys-Gly) (interchain with G-Cter in ubiquitin); alternate. A beta stranded transmembrane segment spans residues 274-283 (HKVGLGFELE).

It belongs to the eukaryotic mitochondrial porin family. In terms of assembly, interacts with ARMC12 in a TBC1D21-dependent manner. Interacts with MISFA. Ubiquitinated by PRKN during mitophagy, leading to its degradation and enhancement of mitophagy. Deubiquitinated by USP30.

The protein resides in the mitochondrion outer membrane. Its subcellular location is the membrane. It carries out the reaction chloride(in) = chloride(out). The enzyme catalyses K(+)(in) = K(+)(out). Its function is as follows. Non-selective voltage-gated ion channel that mediates the transport of anions and cations through the mitochondrion outer membrane and plasma membrane. Forms a high-conducting channel with a stable open state and a voltage-induced closure with a mild preference for anions over cations. Involved in male fertility and sperm mitochondrial sheath formation. In Pongo abelii (Sumatran orangutan), this protein is Non-selective voltage-gated ion channel VDAC3.